Consider the following 313-residue polypeptide: Protein FixB (313 aa).

255–283 (LYLAVGISGQIQHMVGANASQTIFAINKD) is an FAD binding site.

Belongs to the ETF alpha-subunit/FixB family. Heterodimer of FixA and FixB.

Its pathway is amine and polyamine metabolism; carnitine metabolism. Its function is as follows. Required for anaerobic carnitine reduction. May bring reductant to CaiA. The polypeptide is Protein FixB (Escherichia coli O139:H28 (strain E24377A / ETEC)).